The sequence spans 363 residues: MKQILFAGVIGLFLTLVGTPLLIKLLARKGYGQYIRDDGPREHASKRGTPTMGGIAFILATVAAYFLAKGITSYLDPDIDAGPTFSGLLVLGLMVGMGLVGFLDDYIKIVKRRSLGLRARAKMIGQLTVGIAFAVLSLQFADNRGNTPASTKLSFITDFGWTIGPVLFVVWALFMILAMSNGVNLTDGLDGLATGASVLVFGAYTFIGVWQFQESCANALTLTNPGACYEVRDPLDLAVVASALMGSCLGFLWWNTSPAKIFMGDTGSLALGGVLAGLAICSRTELLMAILGGLFVLITMSVVIQVGSFRLTGKRVFRMAPLQHHFELKGWSEVLVVVRFWIIQGICVIVGLGLFYAGWATDK.

10 consecutive transmembrane segments (helical) span residues glutamine 3 to isoleucine 23, glycine 48 to alanine 68, proline 83 to leucine 103, alanine 121 to alanine 141, phenylalanine 159 to methionine 179, leucine 192 to phenylalanine 212, proline 234 to tryptophan 254, isoleucine 261 to cysteine 281, leucine 286 to valine 306, and phenylalanine 340 to alanine 360.

Belongs to the glycosyltransferase 4 family. MraY subfamily. Requires Mg(2+) as cofactor.

It is found in the cell membrane. The catalysed reaction is UDP-N-acetyl-alpha-D-muramoyl-L-alanyl-gamma-D-glutamyl-meso-2,6-diaminopimeloyl-D-alanyl-D-alanine + di-trans,octa-cis-undecaprenyl phosphate = di-trans,octa-cis-undecaprenyl diphospho-N-acetyl-alpha-D-muramoyl-L-alanyl-D-glutamyl-meso-2,6-diaminopimeloyl-D-alanyl-D-alanine + UMP. It functions in the pathway cell wall biogenesis; peptidoglycan biosynthesis. Functionally, catalyzes the initial step of the lipid cycle reactions in the biosynthesis of the cell wall peptidoglycan: transfers peptidoglycan precursor phospho-MurNAc-pentapeptide from UDP-MurNAc-pentapeptide onto the lipid carrier undecaprenyl phosphate, yielding undecaprenyl-pyrophosphoryl-MurNAc-pentapeptide, known as lipid I. In Streptomyces coelicolor (strain ATCC BAA-471 / A3(2) / M145), this protein is Phospho-N-acetylmuramoyl-pentapeptide-transferase.